Reading from the N-terminus, the 124-residue chain is Small ribosomal subunit protein uS12 (124 aa).

Residue aspartate 89 is modified to 3-methylthioaspartic acid.

The protein belongs to the universal ribosomal protein uS12 family. Part of the 30S ribosomal subunit. Contacts proteins S8 and S17. May interact with IF1 in the 30S initiation complex.

In terms of biological role, with S4 and S5 plays an important role in translational accuracy. Its function is as follows. Interacts with and stabilizes bases of the 16S rRNA that are involved in tRNA selection in the A site and with the mRNA backbone. Located at the interface of the 30S and 50S subunits, it traverses the body of the 30S subunit contacting proteins on the other side and probably holding the rRNA structure together. The combined cluster of proteins S8, S12 and S17 appears to hold together the shoulder and platform of the 30S subunit. This is Small ribosomal subunit protein uS12 from Tolumonas auensis (strain DSM 9187 / NBRC 110442 / TA 4).